The primary structure comprises 333 residues: Glycerol-3-phosphate dehydrogenase [NAD(P)+] (333 aa).

NADPH is bound by residues Ser10, Trp11, and Lys105. Positions 105, 136, and 138 each coordinate sn-glycerol 3-phosphate. Ala140 is an NADPH binding site. Sn-glycerol 3-phosphate-binding residues include Lys191, Asp244, Ser254, Arg255, and Asn256. Lys191 serves as the catalytic Proton acceptor. NADPH is bound at residue Arg255. NADPH-binding residues include Val279 and Glu281.

Belongs to the NAD-dependent glycerol-3-phosphate dehydrogenase family.

Its subcellular location is the cytoplasm. The enzyme catalyses sn-glycerol 3-phosphate + NAD(+) = dihydroxyacetone phosphate + NADH + H(+). It catalyses the reaction sn-glycerol 3-phosphate + NADP(+) = dihydroxyacetone phosphate + NADPH + H(+). Its pathway is membrane lipid metabolism; glycerophospholipid metabolism. Catalyzes the reduction of the glycolytic intermediate dihydroxyacetone phosphate (DHAP) to sn-glycerol 3-phosphate (G3P), the key precursor for phospholipid synthesis. The sequence is that of Glycerol-3-phosphate dehydrogenase [NAD(P)+] from Syntrophotalea carbinolica (strain DSM 2380 / NBRC 103641 / GraBd1) (Pelobacter carbinolicus).